The following is a 73-amino-acid chain: Large ribosomal subunit protein uL30 (73 aa).

It belongs to the universal ribosomal protein uL30 family. As to quaternary structure, part of the 50S ribosomal subunit.

The chain is Large ribosomal subunit protein uL30 from Borreliella afzelii (strain PKo) (Borrelia afzelii).